The sequence spans 160 residues: Putative tRNA (cytidine(34)-2'-O)-methyltransferase (160 aa).

Residues Ile-82, Gly-107, Leu-128, and Ser-136 each contribute to the S-adenosyl-L-methionine site.

The protein belongs to the class IV-like SAM-binding methyltransferase superfamily. RNA methyltransferase TrmH family. TrmL subfamily.

Its subcellular location is the cytoplasm. It carries out the reaction cytidine(34) in tRNA + S-adenosyl-L-methionine = 2'-O-methylcytidine(34) in tRNA + S-adenosyl-L-homocysteine + H(+). The enzyme catalyses 5-carboxymethylaminomethyluridine(34) in tRNA(Leu) + S-adenosyl-L-methionine = 5-carboxymethylaminomethyl-2'-O-methyluridine(34) in tRNA(Leu) + S-adenosyl-L-homocysteine + H(+). Its function is as follows. Could methylate the ribose at the nucleotide 34 wobble position in tRNA. This Bacillus subtilis (strain 168) protein is Putative tRNA (cytidine(34)-2'-O)-methyltransferase (cspR).